We begin with the raw amino-acid sequence, 435 residues long: Serine--tRNA ligase (435 aa).

L-serine is bound at residue 242-244 (TAE). Residue 273–275 (RSE) participates in ATP binding. Glutamate 296 serves as a coordination point for L-serine. Residue 360 to 363 (EISS) participates in ATP binding. Serine 396 is a binding site for L-serine.

The protein belongs to the class-II aminoacyl-tRNA synthetase family. Type-1 seryl-tRNA synthetase subfamily. Homodimer. The tRNA molecule binds across the dimer.

Its subcellular location is the cytoplasm. It catalyses the reaction tRNA(Ser) + L-serine + ATP = L-seryl-tRNA(Ser) + AMP + diphosphate + H(+). The enzyme catalyses tRNA(Sec) + L-serine + ATP = L-seryl-tRNA(Sec) + AMP + diphosphate + H(+). It participates in aminoacyl-tRNA biosynthesis; selenocysteinyl-tRNA(Sec) biosynthesis; L-seryl-tRNA(Sec) from L-serine and tRNA(Sec): step 1/1. Catalyzes the attachment of serine to tRNA(Ser). Is also able to aminoacylate tRNA(Sec) with serine, to form the misacylated tRNA L-seryl-tRNA(Sec), which will be further converted into selenocysteinyl-tRNA(Sec). The chain is Serine--tRNA ligase from Vibrio vulnificus (strain CMCP6).